The chain runs to 291 residues: Probable L-ascorbate peroxidase 3, peroxisomal (291 aa).

H41 functions as the Proton acceptor in the catalytic mechanism. The interval 114–133 (YVPGRRDSSDSPEEGRLPDA) is disordered. Residues 116–133 (PGRRDSSDSPEEGRLPDA) are compositionally biased toward basic and acidic residues. H161 provides a ligand contact to heme b. T162, T178, and D185 together coordinate K(+). The chain crosses the membrane as a helical span at residues 263–283 (LLMQTAAGVAVAAAVVAWAYL).

Belongs to the peroxidase family. Ascorbate peroxidase subfamily. Heme b serves as cofactor. As to expression, expressed in stems.

It is found in the peroxisome membrane. It catalyses the reaction L-ascorbate + H2O2 = L-dehydroascorbate + 2 H2O. In terms of biological role, plays a key role in hydrogen peroxide removal. The protein is Probable L-ascorbate peroxidase 3, peroxisomal of Oryza sativa subsp. japonica (Rice).